Consider the following 428-residue polypeptide: Elongation factor 1-alpha (428 aa).

One can recognise a tr-type G domain in the interval 5-217 (KPHVNIVFIG…DQIPEPEKPV (213 aa)). The G1 stretch occupies residues 14–21 (GHVDHGKS). 14–21 (GHVDHGKS) serves as a coordination point for GTP. Serine 21 is a binding site for Mg(2+). Residues 68 to 72 (GITID) are G2. The tract at residues 89-92 (DAPG) is G3. GTP contacts are provided by residues 89–93 (DAPGH) and 144–147 (NKMD). The tract at residues 144–147 (NKMD) is G4. A G5 region spans residues 181 to 183 (SAW).

This sequence belongs to the TRAFAC class translation factor GTPase superfamily. Classic translation factor GTPase family. EF-Tu/EF-1A subfamily.

It localises to the cytoplasm. It catalyses the reaction GTP + H2O = GDP + phosphate + H(+). GTP hydrolase that promotes the GTP-dependent binding of aminoacyl-tRNA to the A-site of ribosomes during protein biosynthesis. This is Elongation factor 1-alpha from Pyrococcus abyssi (strain GE5 / Orsay).